We begin with the raw amino-acid sequence, 137 residues long: Nucleoside diphosphate kinase (137 aa).

ATP contacts are provided by K10, F59, R87, T93, R104, and N114. H117 functions as the Pros-phosphohistidine intermediate in the catalytic mechanism.

It belongs to the NDK family. As to quaternary structure, homotetramer. The cofactor is Mg(2+).

The protein localises to the cytoplasm. The catalysed reaction is a 2'-deoxyribonucleoside 5'-diphosphate + ATP = a 2'-deoxyribonucleoside 5'-triphosphate + ADP. It catalyses the reaction a ribonucleoside 5'-diphosphate + ATP = a ribonucleoside 5'-triphosphate + ADP. In terms of biological role, major role in the synthesis of nucleoside triphosphates other than ATP. The ATP gamma phosphate is transferred to the NDP beta phosphate via a ping-pong mechanism, using a phosphorylated active-site intermediate. The polypeptide is Nucleoside diphosphate kinase (Streptomyces griseus subsp. griseus (strain JCM 4626 / CBS 651.72 / NBRC 13350 / KCC S-0626 / ISP 5235)).